Here is a 665-residue protein sequence, read N- to C-terminus: DNA ligase (665 aa).

NAD(+) is bound by residues 31–35 (DKEFD), 80–81 (SL), and E110. K112 (N6-AMP-lysine intermediate) is an active-site residue. NAD(+) is bound by residues R133, E170, K285, and K309. The Zn(2+) site is built by C403, C406, C421, and C427. Positions 587 to 665 (GHTDKLAGQS…NEEEFLKLIS (79 aa)) constitute a BRCT domain.

Belongs to the NAD-dependent DNA ligase family. LigA subfamily. The cofactor is Mg(2+). It depends on Mn(2+) as a cofactor.

The catalysed reaction is NAD(+) + (deoxyribonucleotide)n-3'-hydroxyl + 5'-phospho-(deoxyribonucleotide)m = (deoxyribonucleotide)n+m + AMP + beta-nicotinamide D-nucleotide.. Its function is as follows. DNA ligase that catalyzes the formation of phosphodiester linkages between 5'-phosphoryl and 3'-hydroxyl groups in double-stranded DNA using NAD as a coenzyme and as the energy source for the reaction. It is essential for DNA replication and repair of damaged DNA. The polypeptide is DNA ligase (Bacteroides fragilis (strain ATCC 25285 / DSM 2151 / CCUG 4856 / JCM 11019 / LMG 10263 / NCTC 9343 / Onslow / VPI 2553 / EN-2)).